Here is a 440-residue protein sequence, read N- to C-terminus: Ribosomal protein uS12 methylthiotransferase RimO (440 aa).

One can recognise an MTTase N-terminal domain in the interval 2 to 118 (KKAGIIHLGC…FVSLITSNGE (117 aa)). Cysteine 11, cysteine 47, cysteine 81, cysteine 154, cysteine 158, and cysteine 161 together coordinate [4Fe-4S] cluster. A Radical SAM core domain is found at 140-370 (ISPNFWVYVK…MSTQKEISKK (231 aa)). The 68-residue stretch at 373–440 (AKLLGREFDV…RAYDLLGELV (68 aa)) folds into the TRAM domain.

It belongs to the methylthiotransferase family. RimO subfamily. Requires [4Fe-4S] cluster as cofactor.

It is found in the cytoplasm. The catalysed reaction is L-aspartate(89)-[ribosomal protein uS12]-hydrogen + (sulfur carrier)-SH + AH2 + 2 S-adenosyl-L-methionine = 3-methylsulfanyl-L-aspartate(89)-[ribosomal protein uS12]-hydrogen + (sulfur carrier)-H + 5'-deoxyadenosine + L-methionine + A + S-adenosyl-L-homocysteine + 2 H(+). Catalyzes the methylthiolation of an aspartic acid residue of ribosomal protein uS12. The protein is Ribosomal protein uS12 methylthiotransferase RimO of Dictyoglomus thermophilum (strain ATCC 35947 / DSM 3960 / H-6-12).